A 226-amino-acid polypeptide reads, in one-letter code: Cytidylate kinase (226 aa).

Residue 10 to 18 coordinates ATP; sequence GPASSGKST.

Belongs to the cytidylate kinase family. Type 1 subfamily.

Its subcellular location is the cytoplasm. The enzyme catalyses CMP + ATP = CDP + ADP. It catalyses the reaction dCMP + ATP = dCDP + ADP. In Streptococcus pyogenes serotype M28 (strain MGAS6180), this protein is Cytidylate kinase.